Here is a 126-residue protein sequence, read N- to C-terminus: uncharacterized protein (126 aa).

Positions 4–126 (RIDHTGIMVR…DGEWIEFFQR (123 aa)) constitute a VOC domain. The a divalent metal cation site is built by H7, E42, H74, and E122.

This sequence belongs to the glyoxalase I family.

This is an uncharacterized protein from Bacillus subtilis (strain 168).